Reading from the N-terminus, the 485-residue chain is MAANEIRTRFAPSPTGYMHIGNLRTALYTYLIAKHEDGKFILRIEDTDQERYVEDALAVIYKTLEMTGLKHDEGPDVGGPVGPYVQSERKGLYLDYAKKLVEKGEAYYCFCSKERLDILKTNSEALKRPFKYDKHCANLSKEEVQEKLDAGVPYVIRQNNPTTGSTTFDDVIYGRISVDNSELDDMILIKSDGYPTYNFANVVDDHLMGITHVVRGNEYLSSAPKYNRLYEAFGWNVPIYVHCPPIMKDAHSKLSKRNGDASFQDLIEKGYLKEAVLNYIALLGWNPEGTNEILSLEDMVKLFDYTHINKSPAVFDPVKLKWMNGEYVRKLSLDEFHKAALSYYDGVITKENIDLKKISELIQTRVEIFSDIPEMVDFFNELPDYDIEMYTHKKMKTNPEISLDSLKNCLPVIENIEDWNLDNIQNTIMNYIKDLGVKNGVVLWPLRTALSGKKFTPGGAFEIADIIGKDESIRRIKIGIEKLEK.

The short motif at 12–22 (PSPTGYMHIGN) is the 'HIGH' region element. The 'KMSKS' region signature appears at 253 to 257 (KLSKR). Position 256 (K256) interacts with ATP.

The protein belongs to the class-I aminoacyl-tRNA synthetase family. Glutamate--tRNA ligase type 1 subfamily. Monomer.

Its subcellular location is the cytoplasm. The catalysed reaction is tRNA(Glu) + L-glutamate + ATP = L-glutamyl-tRNA(Glu) + AMP + diphosphate. Its function is as follows. Catalyzes the attachment of glutamate to tRNA(Glu) in a two-step reaction: glutamate is first activated by ATP to form Glu-AMP and then transferred to the acceptor end of tRNA(Glu). In Clostridium acetobutylicum (strain ATCC 824 / DSM 792 / JCM 1419 / IAM 19013 / LMG 5710 / NBRC 13948 / NRRL B-527 / VKM B-1787 / 2291 / W), this protein is Glutamate--tRNA ligase.